A 144-amino-acid chain; its full sequence is Large ribosomal subunit protein uL15 (144 aa).

The disordered stretch occupies residues 1 to 58; sequence MRLNELAPEPGSRPSAKRVGRGIGSGLGKTGGRGHKGLKSRSGGSVAPGFEGGQQPLA. The span at 21 to 31 shows a compositional bias: gly residues; that stretch reads RGIGSGLGKTG.

Belongs to the universal ribosomal protein uL15 family. As to quaternary structure, part of the 50S ribosomal subunit.

Functionally, binds to the 23S rRNA. This chain is Large ribosomal subunit protein uL15, found in Marinobacter nauticus (strain ATCC 700491 / DSM 11845 / VT8) (Marinobacter aquaeolei).